A 491-amino-acid chain; its full sequence is Glutamyl-tRNA(Gln) amidotransferase subunit A (491 aa).

Catalysis depends on charge relay system residues Lys79 and Ser154. The active-site Acyl-ester intermediate is Ser178.

This sequence belongs to the amidase family. GatA subfamily. As to quaternary structure, heterotrimer of A, B and C subunits.

It catalyses the reaction L-glutamyl-tRNA(Gln) + L-glutamine + ATP + H2O = L-glutaminyl-tRNA(Gln) + L-glutamate + ADP + phosphate + H(+). Functionally, allows the formation of correctly charged Gln-tRNA(Gln) through the transamidation of misacylated Glu-tRNA(Gln) in organisms which lack glutaminyl-tRNA synthetase. The reaction takes place in the presence of glutamine and ATP through an activated gamma-phospho-Glu-tRNA(Gln). This is Glutamyl-tRNA(Gln) amidotransferase subunit A from Alkaliphilus metalliredigens (strain QYMF).